Consider the following 150-residue polypeptide: Large ribosomal subunit protein bL9 (150 aa).

This sequence belongs to the bacterial ribosomal protein bL9 family.

Binds to the 23S rRNA. In Hamiltonella defensa subsp. Acyrthosiphon pisum (strain 5AT), this protein is Large ribosomal subunit protein bL9.